The primary structure comprises 266 residues: Apolipoprotein A-I (266 aa).

A signal peptide spans 1–18; the sequence is MKAVVLTLAVLFLTGSQA. Repeat copies occupy residues 67 to 88 and 89 to 110. A 10 X approximate tandem repeats region spans residues 67–266; it reads LKLLDNWDSL…DEAAKKLNTQ (200 aa). Met-109 is modified (methionine sulfoxide). A 3; half-length repeat occupies 111–121; the sequence is KDLEEVKQKVQ. A run of 5 repeats spans residues 122–143, 144–165, 166–187, 188–209, and 210–231. Residues 232–242 form a 9; half-length repeat; sequence PALEDLRQGLL. Repeat unit 10 spans residues 243–266; it reads PVLESFKVSLLAAVDEAAKKLNTQ.

The protein belongs to the apolipoprotein A1/A4/E family. In terms of assembly, homodimer. Interacts with APOA1BP and CLU. Component of a sperm activating protein complex (SPAP), consisting of APOA1, an immunoglobulin heavy chain, an immunoglobulin light chain and albumin. Interacts with NDRG1. Interacts with SCGB3A2. Interacts with NAXE and YJEFN3. Post-translationally, glycosylated. In terms of processing, palmitoylated. Phosphorylation sites are present in the extracellular medium.

The protein resides in the secreted. In terms of biological role, participates in the reverse transport of cholesterol from tissues to the liver for excretion by promoting cholesterol efflux from tissues and by acting as a cofactor for the lecithin cholesterol acyltransferase (LCAT). As part of the SPAP complex, activates spermatozoa motility. In Mustela putorius furo (European domestic ferret), this protein is Apolipoprotein A-I (APOA1).